A 198-amino-acid chain; its full sequence is Ribonuclease HII (198 aa).

The 189-residue stretch at 10–198 (QLVAGVDEVG…PVKRALGLAS (189 aa)) folds into the RNase H type-2 domain. The a divalent metal cation site is built by D16, E17, and D108.

This sequence belongs to the RNase HII family. Mn(2+) is required as a cofactor. The cofactor is Mg(2+).

The protein localises to the cytoplasm. The enzyme catalyses Endonucleolytic cleavage to 5'-phosphomonoester.. Its function is as follows. Endonuclease that specifically degrades the RNA of RNA-DNA hybrids. The sequence is that of Ribonuclease HII from Citrobacter koseri (strain ATCC BAA-895 / CDC 4225-83 / SGSC4696).